We begin with the raw amino-acid sequence, 420 residues long: Glucose-1-phosphate adenylyltransferase (420 aa).

Residues Y107, G172, 187 to 188 (EK), and S205 each bind alpha-D-glucose 1-phosphate.

The protein belongs to the bacterial/plant glucose-1-phosphate adenylyltransferase family. Homotetramer.

The catalysed reaction is alpha-D-glucose 1-phosphate + ATP + H(+) = ADP-alpha-D-glucose + diphosphate. It participates in glycan biosynthesis; glycogen biosynthesis. Its function is as follows. Involved in the biosynthesis of ADP-glucose, a building block required for the elongation reactions to produce glycogen. Catalyzes the reaction between ATP and alpha-D-glucose 1-phosphate (G1P) to produce pyrophosphate and ADP-Glc. This Rhizobium meliloti (strain 1021) (Ensifer meliloti) protein is Glucose-1-phosphate adenylyltransferase.